A 1392-amino-acid polypeptide reads, in one-letter code: ENHANCER OF AG-4 protein 2 (1392 aa).

Residues 20-77 (LGDLVLAKVKGFPAWPAKISRPEDWDRAPDPKKYFVQFFGTEEIAFVAPPDIQAFTSE) form the PWWP domain. Positions 184–194 (ESKVKTTSPVS) are enriched in polar residues. Disordered regions lie at residues 184 to 354 (ESKV…STGT), 384 to 428 (KRQR…PAAQ), 575 to 613 (KKPQSDSCKEAVAGSDKISSSQSQPANQRHKSASVGERL), and 723 to 766 (QGHH…GGSL). Basic and acidic residues-rich tracts occupy residues 196–215 (SLEHSSFDPKIKKEDFDKGT), 239–258 (KEAGGSDRKGEDTVHRDKSN), and 311–345 (LESEQGKLAPRVDESSRAAKKPRCESADNKVKCEI). The span at 391 to 400 (EHATSPSFSG) shows a compositional bias: polar residues. The segment covering 401-417 (SRDKSGKGHLEQKDRSS) has biased composition (basic and acidic residues). Polar residues-rich tracts occupy residues 591 to 601 (KISSSQSQPAN) and 725 to 744 (HHQQGSSPSNHGHQSLSRNQ). Residues 771 to 912 (EAAISRDAFE…RYIDDIRASG (142 aa)) enclose the CID domain. Disordered regions lie at residues 957 to 986 (FFSSHNFEDDEEDDDLPTSQKEKSTSAGER), 1014 to 1356 (LEME…NYQP), and 1369 to 1392 (PGHTAPQMLPSRPDIPTVNCWRPA). Residues 1059–1129 (EDSPPLPQES…SPPPPPPPPS (71 aa)) show a composition bias toward pro residues. A compositionally biased stretch (polar residues) spans 1157-1175 (LSHQTYPGSMQQDRSSIFT). Low complexity predominate over residues 1215 to 1225 (SSREPSSFTSS). Polar residues-rich tracts occupy residues 1240 to 1255 (EASSQNHRFQPSTPLS) and 1265 to 1284 (APSSHFSYPSHIQSQSQHSY). Positions 1293-1306 (QRDDARRYRNEEPW) are enriched in basic and acidic residues. The segment covering 1311 to 1320 (SGHSAENQNG) has biased composition (polar residues).

In terms of tissue distribution, expressed in the inflorescence meristem, floral primordia, inflorescence stem, and floral pedicels. Also detected in the shoot apical meristem, stems, leaves, embryos, and roots.

The protein resides in the nucleus. Transcription factor that functions as a repressor of flowering by enhancing the expression of several genes that delay flowering including FLC, FLM/MAF1, MAF2 and SVP. Also acts in the floral homeotic AGAMOUS (AG) pathway, specifically by processing the AGAMOUS pre-mRNA. Functions in association with HUA1 and HEN4 in AG pre-mRNA processing. Involved in all three aspects of the AG functions, the specification of stamen and carpel identities, the control of floral determinacy, and the spatial restriction of AP1 expression. Acts as a transcription regulator that controls anthocyanin accumulation. This chain is ENHANCER OF AG-4 protein 2, found in Arabidopsis thaliana (Mouse-ear cress).